Here is a 101-residue protein sequence, read N- to C-terminus: Urease subunit beta (101 aa).

It belongs to the urease beta subunit family. In terms of assembly, heterotrimer of UreA (gamma), UreB (beta) and UreC (alpha) subunits. Three heterotrimers associate to form the active enzyme.

It localises to the cytoplasm. It carries out the reaction urea + 2 H2O + H(+) = hydrogencarbonate + 2 NH4(+). It participates in nitrogen metabolism; urea degradation; CO(2) and NH(3) from urea (urease route): step 1/1. This Dinoroseobacter shibae (strain DSM 16493 / NCIMB 14021 / DFL 12) protein is Urease subunit beta.